Consider the following 477-residue polypeptide: Ribulose bisphosphate carboxylase large chain (477 aa).

The propeptide occupies 1–2 (MS). Pro3 carries the N-acetylproline modification. Lys14 is subject to N6,N6,N6-trimethyllysine. The substrate site is built by Asn123 and Thr173. The active-site Proton acceptor is Lys175. Substrate is bound at residue Lys177. Residues Lys201, Asp203, and Glu204 each contribute to the Mg(2+) site. Lys201 carries the N6-carboxylysine modification. The active-site Proton acceptor is the His294. Substrate is bound by residues Arg295, His327, and Ser379.

Belongs to the RuBisCO large chain family. Type I subfamily. As to quaternary structure, heterohexadecamer of 8 large chains and 8 small chains; disulfide-linked. The disulfide link is formed within the large subunit homodimers. Mg(2+) is required as a cofactor. The disulfide bond which can form in the large chain dimeric partners within the hexadecamer appears to be associated with oxidative stress and protein turnover.

It localises to the plastid. It is found in the chloroplast. It carries out the reaction 2 (2R)-3-phosphoglycerate + 2 H(+) = D-ribulose 1,5-bisphosphate + CO2 + H2O. It catalyses the reaction D-ribulose 1,5-bisphosphate + O2 = 2-phosphoglycolate + (2R)-3-phosphoglycerate + 2 H(+). In terms of biological role, ruBisCO catalyzes two reactions: the carboxylation of D-ribulose 1,5-bisphosphate, the primary event in carbon dioxide fixation, as well as the oxidative fragmentation of the pentose substrate in the photorespiration process. Both reactions occur simultaneously and in competition at the same active site. The polypeptide is Ribulose bisphosphate carboxylase large chain (rbcL) (Solanum tuberosum (Potato)).